The following is a 492-amino-acid chain: RNA helicase CrhR (492 aa).

The Q motif motif lies at 7 to 35 (STFADLGLSEKRCQLLADIGFEAPTQIQT). The Helicase ATP-binding domain maps to 38-207 (IPLLLSGRDM…NQFLNDPALV (170 aa)). Position 51–58 (51–58 (SQTGTGKT)) interacts with ATP. Residues 155-158 (DEAD) carry the DEAD box motif. One can recognise a Helicase C-terminal domain in the interval 234-379 (KALQPILEME…VCTIPNRSQV (146 aa)). Residues 451–492 (VLRRGRNAGGGQNKSGGGYQGKPGKPRRSSGGRRPAYSDRQQ) form a disordered region. Residues 457–471 (NAGGGQNKSGGGYQG) show a composition bias toward gly residues.

This sequence belongs to the DEAD box helicase family.

It localises to the cytoplasm. The protein resides in the cell inner membrane. Its subcellular location is the cellular thylakoid membrane. The enzyme catalyses ATP + H2O = ADP + phosphate + H(+). Its activity is regulated as follows. Helicase inhibited by the slowly-hydrolyzing ATP analog ATP-gamma-S. Protein is rapidly degraded upon shifting from 20 to 30 degrees Celsius, the degradation machinery is only transiently present in cells grown at 30 degrees Celsius, is inhibited by commercial protease inhibitors and requires full-length protein expression (the N-terminal fragment does not induce proteolysis although it can be degraded by wild-type extract). An ATP-dependent bidirectional RNA helicase with RNA-dependent ATPase activity; does not unwind dsDNA, uses only (d)ATP. Also has ATP-dependent RNA annealing activity; concurrent annealing and helicase activity promote strand-exchange activity. In vitro has low helicase processivity, annealing processivity is probably higher. Required for correct cold adaptation, probably by aiding translation of mRNAs required for photosynthesis and electron transport. Probably regulates the cold-shock-inducible expression of the GroESL chaperones. May partially regulate its own expression at both the transcriptional and post-transcriptional level (experiments used a construct expressing a 25 kDa trunacted protein which might have dominant-negative effects); is probably not directly involved in the pathway responsible for mRNA degradation. The protein is RNA helicase CrhR of Synechocystis sp. (strain ATCC 27184 / PCC 6803 / Kazusa).